A 164-amino-acid chain; its full sequence is SsrA-binding protein (164 aa).

The disordered stretch occupies residues 143–164 (HDKRQDEKQKSIKKEINSVLKR). Positions 145-158 (KRQDEKQKSIKKEI) are enriched in basic and acidic residues.

The protein belongs to the SmpB family.

It localises to the cytoplasm. Its function is as follows. Required for rescue of stalled ribosomes mediated by trans-translation. Binds to transfer-messenger RNA (tmRNA), required for stable association of tmRNA with ribosomes. tmRNA and SmpB together mimic tRNA shape, replacing the anticodon stem-loop with SmpB. tmRNA is encoded by the ssrA gene; the 2 termini fold to resemble tRNA(Ala) and it encodes a 'tag peptide', a short internal open reading frame. During trans-translation Ala-aminoacylated tmRNA acts like a tRNA, entering the A-site of stalled ribosomes, displacing the stalled mRNA. The ribosome then switches to translate the ORF on the tmRNA; the nascent peptide is terminated with the 'tag peptide' encoded by the tmRNA and targeted for degradation. The ribosome is freed to recommence translation, which seems to be the essential function of trans-translation. The sequence is that of SsrA-binding protein from Prochlorococcus marinus (strain MIT 9312).